The following is a 440-amino-acid chain: Xylose isomerase (440 aa).

Active-site residues include histidine 100 and aspartate 103. Glutamate 231, glutamate 267, histidine 270, aspartate 295, aspartate 306, aspartate 308, and aspartate 338 together coordinate Mg(2+).

The protein belongs to the xylose isomerase family. Homotetramer. It depends on Mg(2+) as a cofactor.

The protein localises to the cytoplasm. It catalyses the reaction alpha-D-xylose = alpha-D-xylulofuranose. The protein is Xylose isomerase of Burkholderia cenocepacia (strain ATCC BAA-245 / DSM 16553 / LMG 16656 / NCTC 13227 / J2315 / CF5610) (Burkholderia cepacia (strain J2315)).